A 145-amino-acid chain; its full sequence is uncharacterized protein (145 aa).

It belongs to the methyltransferase superfamily.

In terms of biological role, probable methyltransferase. This is an uncharacterized protein from Schizosaccharomyces pombe (strain 972 / ATCC 24843) (Fission yeast).